The chain runs to 558 residues: Deleted in azoospermia protein 2 (558 aa).

A compositionally biased stretch (polar residues) spans 1–10 (MSAANPETPN). A disordered region spans residues 1 to 27 (MSAANPETPNSTISREASTQSSSAAAS). Over residues 11 to 27 (STISREASTQSSSAAAS) the composition is skewed to low complexity. The region spanning 40 to 115 (NTVFVGGIDA…KKLKLGPAIR (76 aa)) is the RRM domain. 15 DAZ domains span residues 167–190 (AYSA…YNYQ), 191–214 (EYPT…YNYQ), 215–238 (PFPA…YNYQ), 239–262 (AFPA…YNYQ), 263–286 (PFPA…YNYQ), 287–310 (AFPA…YNYQ), 311–334 (AFPA…YNYQ), 335–358 (AFPA…YNYQ), 359–382 (AFPA…YNYQ), 383–406 (AFPA…YNYQ), 407–430 (AFPA…YNYQ), 431–454 (AFPA…YNYQ), 455–478 (AFPA…YNYQ), 479–502 (AFPA…YNYQ), and 503–526 (AFPA…YNYQ).

The protein belongs to the RRM DAZ family. In terms of assembly, forms a heterodimer with BOLL and DAZL. Interacts with PUM2, DAZAP1, DAZAP2, DZIP1 and DZIP3. As to expression, testis specific.

It localises to the cytoplasm. The protein resides in the nucleus. RNA-binding protein that plays an essential role in spermatogenesis. May act by binding to the 3'-UTR of mRNAs and regulating their translation. The chain is Deleted in azoospermia protein 2 (DAZ2) from Homo sapiens (Human).